The sequence spans 462 residues: L-seryl-tRNA(Sec) selenium transferase (462 aa).

K294 carries the N6-(pyridoxal phosphate)lysine modification.

The protein belongs to the SelA family. In terms of assembly, homodecamer; pentamer of dimers. Binds only one seryl-tRNA(Sec) per dimer. The cofactor is pyridoxal 5'-phosphate.

It is found in the cytoplasm. It catalyses the reaction L-seryl-tRNA(Sec) + selenophosphate + H(+) = L-selenocysteinyl-tRNA(Sec) + phosphate. Its pathway is aminoacyl-tRNA biosynthesis; selenocysteinyl-tRNA(Sec) biosynthesis; selenocysteinyl-tRNA(Sec) from L-seryl-tRNA(Sec) (bacterial route): step 1/1. Functionally, converts seryl-tRNA(Sec) to selenocysteinyl-tRNA(Sec) required for selenoprotein biosynthesis. This Yersinia pestis bv. Antiqua (strain Antiqua) protein is L-seryl-tRNA(Sec) selenium transferase.